Here is a 91-residue protein sequence, read N- to C-terminus: DNA-binding protein HU (91 aa).

Belongs to the bacterial histone-like protein family. Homodimer.

Histone-like DNA-binding protein which is capable of wrapping DNA to stabilize it, and thus to prevent its denaturation under extreme environmental conditions. This is DNA-binding protein HU (hup) from Streptococcus thermophilus.